The primary structure comprises 250 residues: Small ribosomal subunit protein uS3 (250 aa).

In terms of domain architecture, KH type-2 spans 39-109 (IRNYVQARLK…EVKIDVVEVI (71 aa)). Basic and acidic residues predominate over residues 225 to 239 (INERRGDSKSRPRDP). A disordered region spans residues 225 to 250 (INERRGDSKSRPRDPRNKRRRRTKRS). Over residues 240–250 (RNKRRRRTKRS) the composition is skewed to basic residues.

It belongs to the universal ribosomal protein uS3 family. As to quaternary structure, part of the 30S ribosomal subunit. Forms a tight complex with proteins S10 and S14.

Functionally, binds the lower part of the 30S subunit head. Binds mRNA in the 70S ribosome, positioning it for translation. In Chlorobium phaeobacteroides (strain DSM 266 / SMG 266 / 2430), this protein is Small ribosomal subunit protein uS3.